The chain runs to 130 residues: Ribosome biogenesis inhibitor MINAS-60 (130 aa).

A disordered region spans residues 61–130 (SRVRRIPTRP…RRRRPVTSSC (70 aa)). A compositionally biased stretch (basic residues) spans 109–130 (KGRRRRRRRMRRRRRRPVTSSC).

Interacts with 60S ribosome assembly factors GTPBP4 and MRTO4.

It localises to the nucleus. The protein resides in the nucleolus. Functionally, acts as a late-stage inhibitor of pre-60S ribosome assembly by preventing pre-60S ribosome export from nucleus. This is Ribosome biogenesis inhibitor MINAS-60 from Homo sapiens (Human).